We begin with the raw amino-acid sequence, 385 residues long: UPF0744 protein YSC83 (385 aa).

Belongs to the UPF0744 family.

It localises to the mitochondrion outer membrane. In Saccharomyces cerevisiae (strain ATCC 204508 / S288c) (Baker's yeast), this protein is UPF0744 protein YSC83 (YSC83).